Here is a 194-residue protein sequence, read N- to C-terminus: Probable GTP-binding protein EngB (194 aa).

One can recognise an EngB-type G domain in the interval Asp-22–Glu-194. GTP contacts are provided by residues Gly-30–Ser-37, Gly-57–Thr-61, Asp-75–Gly-78, Thr-142–Asp-145, and Phe-174–Ser-176. Positions 37 and 59 each coordinate Mg(2+).

It belongs to the TRAFAC class TrmE-Era-EngA-EngB-Septin-like GTPase superfamily. EngB GTPase family. Mg(2+) serves as cofactor.

Necessary for normal cell division and for the maintenance of normal septation. The protein is Probable GTP-binding protein EngB of Listeria monocytogenes serovar 1/2a (strain ATCC BAA-679 / EGD-e).